A 345-amino-acid polypeptide reads, in one-letter code: Anthranilate phosphoribosyltransferase (345 aa).

5-phospho-alpha-D-ribose 1-diphosphate contacts are provided by residues G83, G86–D87, T91, N93–T96, K111–S119, and S123. Anthranilate is bound at residue G83. S95 contacts Mg(2+). An anthranilate-binding site is contributed by N114. R169 contributes to the anthranilate binding site. 2 residues coordinate Mg(2+): D228 and E229.

This sequence belongs to the anthranilate phosphoribosyltransferase family. As to quaternary structure, homodimer. It depends on Mg(2+) as a cofactor.

The enzyme catalyses N-(5-phospho-beta-D-ribosyl)anthranilate + diphosphate = 5-phospho-alpha-D-ribose 1-diphosphate + anthranilate. It participates in amino-acid biosynthesis; L-tryptophan biosynthesis; L-tryptophan from chorismate: step 2/5. In terms of biological role, catalyzes the transfer of the phosphoribosyl group of 5-phosphorylribose-1-pyrophosphate (PRPP) to anthranilate to yield N-(5'-phosphoribosyl)-anthranilate (PRA). In Paracoccus denitrificans (strain Pd 1222), this protein is Anthranilate phosphoribosyltransferase.